The primary structure comprises 95 residues: Protein GOLVEN 9 (95 aa).

The signal sequence occupies residues 1–24 (MKKTSLKLMTLVLGFCFVIYLLQG). Positions 25–73 (PRGGSRNGDLLIARKLISLEPIETKNAARSLKDSISTDLEEEVDRLMEH) are excised as a propeptide. The disordered stretch occupies residues 72 to 95 (EHEYPSPVKPRKRTPVHNGVRNRH). A Sulfotyrosine modification is found at Tyr-75. Basic residues predominate over residues 80–95 (KPRKRTPVHNGVRNRH). A Hydroxyproline modification is found at Pro-86. Residues 90–95 (GVRNRH) constitute a propeptide that is removed on maturation.

The protein belongs to the RGF family. As to quaternary structure, binds to LRR receptor-like serine/threonine-protein kinases to trigger their dimerization with SERK proteins and subsequent signaling. In terms of tissue distribution, expressed in roots.

It is found in the secreted. Its function is as follows. Signaling peptide (root growth factor) required during root gravitropism in a PIN2-traffic dependent manner. Regulates the pattern of root growth and lateral root development by modulating the length and the number of cortical cells in the root apical meristem (RAM), and the anticlinal asymmetric cell divisions in lateral root initiation cells. The protein is Protein GOLVEN 9 of Arabidopsis thaliana (Mouse-ear cress).